Consider the following 393-residue polypeptide: Protein TsgA (393 aa).

The Cytoplasmic portion of the chain corresponds to 1-10 (MTNSNRIKLT). Residues 11–31 (WISFLSYALTGALVIVTGMVM) form a helical membrane-spanning segment. Residues 32–50 (GNIADYFHLPVSSMSNTFT) lie on the Periplasmic side of the membrane. Residues 51–71 (FLNAGILISIFLNAWLMEIVP) form a helical membrane-spanning segment. The Cytoplasmic segment spans residues 72-77 (LKTQLR). Residues 78–98 (FGFILMVLAVAGLMFSHSLAL) form a helical membrane-spanning segment. The Periplasmic segment spans residues 99–100 (FS). The helical transmembrane segment at 101–121 (AAMFVLGLVSGITMSIGTFLI) threads the bilayer. Over 122–133 (TQLYEGRQRGSR) the chain is Cytoplasmic. The chain crosses the membrane as a helical span at residues 134 to 154 (LLFTDSFFSMAGMIFPMVAAF). Residues 155-161 (LLARSIE) are Periplasmic-facing. Residues 162 to 182 (WYWVYACIGLVYLAIFILTFG) form a helical membrane-spanning segment. Topologically, residues 183–205 (CEFPALGKHAQHSQAPVVKEKWG) are cytoplasmic. A helical transmembrane segment spans residues 206–226 (IGVLFLAVAALCYILGQLGFI). Topologically, residues 227–244 (SWVPEYAKGLGMSLNDAG) are periplasmic. Residues 245–265 (ALVSDFWMSYMFGMWAFSFIL) form a helical membrane-spanning segment. At 266 to 272 (RFFDLQR) the chain is on the cytoplasmic side. The helical transmembrane segment at 273-293 (ILTVLAGMAAVLMYLFITGTQ) threads the bilayer. Residues 294–297 (AHMP) lie on the Periplasmic side of the membrane. The helical transmembrane segment at 298-318 (WFILTLGFFSSAIYTSIITLG) threads the bilayer. Over 319–331 (SQQTKVASPKLVN) the chain is Cytoplasmic. The chain crosses the membrane as a helical span at residues 332 to 352 (FILTCGTIGTMLTFVVTGPIV). Residues 353–360 (AHSGPQAA) lie on the Periplasmic side of the membrane. The chain crosses the membrane as a helical span at residues 361–381 (LLTANGLYAVVFVMCFALGFV). Topologically, residues 382–393 (SRHRQHSSPAAH) are cytoplasmic.

It belongs to the major facilitator superfamily. TsgA family.

Its subcellular location is the cell inner membrane. The chain is Protein TsgA from Salmonella paratyphi A (strain ATCC 9150 / SARB42).